A 444-amino-acid chain; its full sequence is Serine carboxypeptidase 2 (444 aa).

60 to 62 (NGG) is a binding site for substrate. 3 disulfide bridges follow: C65-C324, C222-C234, and C258-C291. N-linked (GlcNAc...) asparagine glycosylation is found at N116 and N127. Residue 157-159 (ESY) participates in substrate binding. S158 is a catalytic residue. N-linked (GlcNAc...) asparagine glycosylation occurs at N259. Residues 260–286 (ITSSSSSSSSSLSQQRRSRGRYPWLTG) constitute a propeptide, linker peptide. N-linked (GlcNAc...) asparagine glycosylation is found at N312 and N318. Catalysis depends on residues D361 and H413. 409-413 (RGAGH) contributes to the substrate binding site.

It belongs to the peptidase S10 family. In terms of assembly, carboxypeptidase II is a dimer, where each monomer is composed of two chains linked by a disulfide bond. N-glycosylated.

The enzyme catalyses Preferential release of a C-terminal arginine or lysine residue.. The chain is Serine carboxypeptidase 2 (CBP2) from Triticum aestivum (Wheat).